The sequence spans 2287 residues: Protein Ycf2 (2287 aa).

Residue 1641–1648 participates in ATP binding; the sequence is GSIGTGRS.

It belongs to the Ycf2 family.

Its subcellular location is the plastid. It localises to the chloroplast stroma. Functionally, probable ATPase of unknown function. Its presence in a non-photosynthetic plant (Epifagus virginiana) and experiments in tobacco indicate that it has an essential function which is probably not related to photosynthesis. This Lepidium virginicum (Virginia pepperweed) protein is Protein Ycf2.